A 457-amino-acid chain; its full sequence is Acetate--CoA ligase [ADP-forming] II subunit alpha (457 aa).

Belongs to the acetate CoA ligase alpha subunit family. As to quaternary structure, heterotetramer of two alpha and two beta subunits.

It carries out the reaction acetate + ATP + CoA = acetyl-CoA + ADP + phosphate. Its function is as follows. Catalyzes the reversible formation of acetate and ATP from acetyl-CoA by using ADP and phosphate. Can use other substrates such as phenylacetyl-CoA, indoleacetyl-CoA and isobutyryl-CoA, but not succinyl-CoA. Seems to be involved primarily in the degradation of aryl-CoA esters to the corresponding acids. Participates in the conversion of acetyl-CoA to acetate and in the degradation of branched-chain amino acids via branched-chain-acyl-CoA esters. The chain is Acetate--CoA ligase [ADP-forming] II subunit alpha from Pyrococcus furiosus (strain ATCC 43587 / DSM 3638 / JCM 8422 / Vc1).